The primary structure comprises 163 residues: MTTFLSDSEHPQDVKAPPKSARRRAREFVLQGLYQWRVGGADEASIEAYAPEMEGFAKADREFFVGTLRGVISQQEKLIEQVSTHIDRPFNELSPVEACILMLGSFEMLNHAETPYRVIINEAIELTKAFGGTDGHKYVNGVLDKVAAILRPDEVAARKQAKK.

Positions 1 to 21 are disordered; it reads MTTFLSDSEHPQDVKAPPKSA.

The protein belongs to the NusB family.

Involved in transcription antitermination. Required for transcription of ribosomal RNA (rRNA) genes. Binds specifically to the boxA antiterminator sequence of the ribosomal RNA (rrn) operons. The polypeptide is Transcription antitermination protein NusB (Dechloromonas aromatica (strain RCB)).